Reading from the N-terminus, the 275-residue chain is MLKSIKSSGVTAVLDHDGFNKRIRVVRYDGAIEKALPDIVAAAKEENAEKIIVYAKQHDEPILAKQLFAPEGYLKGYYLGHSACVMVRYLSESRRQTDSYTEEQEIIEAIYRTAPRLRNDSTPVFTMRKAETNDMYQLSMLYKKVFRTYPTPVFDPAYIEKTMNANTVYYIMLDHDRLISAASAEINPELGHAEITDCAVLPEYRGHSLTSFLIEALEKEMAGEDIVHVFSLARASSFGMNAVLYHSGYQYGGRLINNCFIAEGLENMNIWCKQL.

The region spanning 125–271 (FTMRKAETND…AEGLENMNIW (147 aa)) is the N-acetyltransferase domain.

Belongs to the acetyltransferase family.

It carries out the reaction (3S)-3,6-diaminohexanoate + acetyl-CoA = (3S)-6-acetamido-3-aminohexanoate + CoA + H(+). Functionally, in vitro, is able to catalyze the acetylation of beta-lysine to N6-acetyl-beta-lysine, an archaeal osmolyte produced by methanogenic archaea. Its physiological function has not yet been elucidated. The protein is N-acetyltransferase YodP (yodP) of Bacillus subtilis (strain 168).